Consider the following 224-residue polypeptide: MSRSIAQMIDHTLLKPNTTEDQIVKLCEEAKEYSFASVCVNPTWVALAAQLLKDAPDVKVCTVIGFPLGATTPEVKAFETTNAIENGATEVDMVINIGALKDKQYELVGRDIQAVVKAAEGKALTKVIIETSLLTEEEKKAACELAVKAGADFVKTSTGFSGGGATAEDIALMRKVVGPNLGVKASGGVRDLSDAKAMIDAGATRIGASAGVAIVNGERSEGSY.

The active-site Proton donor/acceptor is the Asp-92. The active-site Schiff-base intermediate with acetaldehyde is the Lys-155. The Proton donor/acceptor role is filled by Lys-184.

The protein belongs to the DeoC/FbaB aldolase family. DeoC type 1 subfamily.

It is found in the cytoplasm. The enzyme catalyses 2-deoxy-D-ribose 5-phosphate = D-glyceraldehyde 3-phosphate + acetaldehyde. The protein operates within carbohydrate degradation; 2-deoxy-D-ribose 1-phosphate degradation; D-glyceraldehyde 3-phosphate and acetaldehyde from 2-deoxy-alpha-D-ribose 1-phosphate: step 2/2. In terms of biological role, catalyzes a reversible aldol reaction between acetaldehyde and D-glyceraldehyde 3-phosphate to generate 2-deoxy-D-ribose 5-phosphate. This is Deoxyribose-phosphate aldolase from Halalkalibacterium halodurans (strain ATCC BAA-125 / DSM 18197 / FERM 7344 / JCM 9153 / C-125) (Bacillus halodurans).